A 108-amino-acid chain; its full sequence is Succinate dehydrogenase assembly factor 4, mitochondrial (108 aa).

The N-terminal 20 residues, M1 to A20, are a transit peptide targeting the mitochondrion. The interval R31–F108 is disordered. Basic and acidic residues-rich tracts occupy residues K52 to G87 and R95 to F108.

The protein belongs to the SDHAF4 family. In terms of assembly, interacts with SDHA in its FAD-bound form.

The protein resides in the mitochondrion matrix. Functionally, plays an essential role in the assembly of succinate dehydrogenase (SDH), an enzyme complex (also referred to as respiratory complex II) that is a component of both the tricarboxylic acid (TCA) cycle and the mitochondrial electron transport chain, and which couples the oxidation of succinate to fumarate with the reduction of ubiquinone (coenzyme Q) to ubiquinol. Binds to the flavoprotein subunit SDHA in its FAD-bound form, blocking the generation of excess reactive oxygen species (ROS) and facilitating its assembly with the iron-sulfur protein subunit SDHB into the SDH catalytic dimer. The chain is Succinate dehydrogenase assembly factor 4, mitochondrial from Homo sapiens (Human).